The following is a 977-amino-acid chain: DNA-directed RNA polymerase 3A, chloroplastic (977 aa).

The N-terminal 72 residues, 1 to 72, are a transit peptide targeting the chloroplast; it reads MASTASYSPS…NNIQSQTTVC (72 aa). Residues aspartate 678, lysine 753, and aspartate 910 contribute to the active site.

This sequence belongs to the phage and mitochondrial RNA polymerase family.

It localises to the plastid. It is found in the chloroplast. The enzyme catalyses RNA(n) + a ribonucleoside 5'-triphosphate = RNA(n+1) + diphosphate. DNA-dependent RNA polymerase catalyzes the transcription of DNA into RNA using the four ribonucleoside triphosphates as substrates. This Nicotiana tabacum (Common tobacco) protein is DNA-directed RNA polymerase 3A, chloroplastic (RPOT3-SYL).